The sequence spans 478 residues: Dihydrolipoyl dehydrogenase (478 aa).

FAD contacts are provided by residues Glu34–Cys49, Lys58, and Gly122. The cysteines at positions 49 and 54 are disulfide-linked. NAD(+) contacts are provided by residues Gly188–Ile192, Glu211, Val245, and Ala276–Arg279. Positions 319 and 327 each coordinate FAD. Residue His451 is the Proton acceptor of the active site.

This sequence belongs to the class-I pyridine nucleotide-disulfide oxidoreductase family. As to quaternary structure, homodimer. FAD is required as a cofactor.

The protein localises to the cytoplasm. The enzyme catalyses N(6)-[(R)-dihydrolipoyl]-L-lysyl-[protein] + NAD(+) = N(6)-[(R)-lipoyl]-L-lysyl-[protein] + NADH + H(+). Its function is as follows. The branched-chain alpha-keto dehydrogenase complex catalyzes the overall conversion of alpha-keto acids to acyl-CoA and CO(2). It contains multiple copies of 3 enzymatic components: branched-chain alpha-keto acid decarboxylase (E1), lipoamide acyltransferase (E2) and lipoamide dehydrogenase (E3). The sequence is that of Dihydrolipoyl dehydrogenase (lpd) from Pseudomonas fluorescens.